The primary structure comprises 428 residues: Serine--tRNA ligase (428 aa).

Position 235-237 (Thr235–Glu237) interacts with L-serine. Arg266 to Glu268 is a binding site for ATP. Glu289 provides a ligand contact to L-serine. Glu353–Ser356 lines the ATP pocket. Ser389 contributes to the L-serine binding site.

It belongs to the class-II aminoacyl-tRNA synthetase family. Type-1 seryl-tRNA synthetase subfamily. As to quaternary structure, homodimer. The tRNA molecule binds across the dimer.

It is found in the cytoplasm. The catalysed reaction is tRNA(Ser) + L-serine + ATP = L-seryl-tRNA(Ser) + AMP + diphosphate + H(+). It carries out the reaction tRNA(Sec) + L-serine + ATP = L-seryl-tRNA(Sec) + AMP + diphosphate + H(+). It participates in aminoacyl-tRNA biosynthesis; selenocysteinyl-tRNA(Sec) biosynthesis; L-seryl-tRNA(Sec) from L-serine and tRNA(Sec): step 1/1. Its function is as follows. Catalyzes the attachment of serine to tRNA(Ser). Is also able to aminoacylate tRNA(Sec) with serine, to form the misacylated tRNA L-seryl-tRNA(Sec), which will be further converted into selenocysteinyl-tRNA(Sec). This is Serine--tRNA ligase from Shewanella denitrificans (strain OS217 / ATCC BAA-1090 / DSM 15013).